The chain runs to 422 residues: Histidine--tRNA ligase (422 aa).

It belongs to the class-II aminoacyl-tRNA synthetase family. Homodimer.

Its subcellular location is the cytoplasm. It catalyses the reaction tRNA(His) + L-histidine + ATP = L-histidyl-tRNA(His) + AMP + diphosphate + H(+). The polypeptide is Histidine--tRNA ligase (Vibrio campbellii (strain ATCC BAA-1116)).